The chain runs to 163 residues: Large ribosomal subunit protein uL18 (163 aa).

The protein belongs to the universal ribosomal protein uL18 family. Part of the 50S ribosomal subunit. Contacts the 5S and 23S rRNAs.

In terms of biological role, this is one of the proteins that bind and probably mediate the attachment of the 5S RNA into the large ribosomal subunit, where it forms part of the central protuberance. The chain is Large ribosomal subunit protein uL18 from Thermoplasma acidophilum (strain ATCC 25905 / DSM 1728 / JCM 9062 / NBRC 15155 / AMRC-C165).